A 119-amino-acid chain; its full sequence is uncharacterized protein (119 aa).

Residues 1 to 29 (MKKVGEEEIKQEENEKEKIVKKLNESDVK) adopt a coiled-coil conformation.

This is an uncharacterized protein from Acidianus sp. F28 (AFV-2).